A 422-amino-acid polypeptide reads, in one-letter code: Zinc finger protein zfp-2 (422 aa).

The tract at residues 95–119 is disordered; that stretch reads AIPCTSSSMQPSTSSNPSSGEHQPV. The span at 99–113 shows a compositional bias: low complexity; that stretch reads TSSSMQPSTSSNPSS. 7 C2H2-type zinc fingers span residues 171-194, 200-222, 229-251, 255-278, 300-322, 328-350, and 356-379; these read YRCT…QEVH, FRCF…LKDH, FSCD…HKMH, STCQ…STAH, YSCS…ERIH, YSCG…IRTH, and YGCG…LAAH.

In terms of tissue distribution, expressed in vulval cells and all somatic gonad structures such as spermatheca, sheath cells, uterine cells and distal tip cells.

The protein localises to the nucleus. Probable zinc finger transcription factor that acts as a transcriptional repressor. Acts redundantly with the transcriptional repressor lin-35 to control the development of somatic gonad lineages. May, in addition, suppress sensitivity to RNAi. The protein is Zinc finger protein zfp-2 of Caenorhabditis elegans.